The following is a 144-amino-acid chain: Large-conductance mechanosensitive channel (144 aa).

2 consecutive transmembrane segments (helical) span residues 21–41 (VGII…ANVI) and 76–96 (GIFL…FCII). The tract at residues 105 to 144 (QRGGKTRRAVQTECGRDAAYRDPRSLETTKQRHGAGYNDD) is disordered. Positions 118-134 (CGRDAAYRDPRSLETTK) are enriched in basic and acidic residues.

The protein belongs to the MscL family. Homopentamer.

The protein resides in the cell inner membrane. In terms of biological role, channel that opens in response to stretch forces in the membrane lipid bilayer. May participate in the regulation of osmotic pressure changes within the cell. The protein is Large-conductance mechanosensitive channel of Sodalis glossinidius (strain morsitans).